The sequence spans 487 residues: UDP-N-acetylmuramoyl-L-alanyl-D-glutamate--2,6-diaminopimelate ligase (487 aa).

UDP-N-acetyl-alpha-D-muramoyl-L-alanyl-D-glutamate contacts are provided by L23 and S25. 108–114 lines the ATP pocket; sequence GTNGKTS. Residues 150 to 151, S177, Q183, and R185 each bind UDP-N-acetyl-alpha-D-muramoyl-L-alanyl-D-glutamate; that span reads TT. K217 is modified (N6-carboxylysine). Residues R378, 402–405, G453, and E457 each bind meso-2,6-diaminopimelate; that span reads DNPR. The short motif at 402–405 is the Meso-diaminopimelate recognition motif element; sequence DNPR.

This sequence belongs to the MurCDEF family. MurE subfamily. Requires Mg(2+) as cofactor. Carboxylation is probably crucial for Mg(2+) binding and, consequently, for the gamma-phosphate positioning of ATP.

The protein resides in the cytoplasm. The catalysed reaction is UDP-N-acetyl-alpha-D-muramoyl-L-alanyl-D-glutamate + meso-2,6-diaminopimelate + ATP = UDP-N-acetyl-alpha-D-muramoyl-L-alanyl-gamma-D-glutamyl-meso-2,6-diaminopimelate + ADP + phosphate + H(+). It participates in cell wall biogenesis; peptidoglycan biosynthesis. In terms of biological role, catalyzes the addition of meso-diaminopimelic acid to the nucleotide precursor UDP-N-acetylmuramoyl-L-alanyl-D-glutamate (UMAG) in the biosynthesis of bacterial cell-wall peptidoglycan. The polypeptide is UDP-N-acetylmuramoyl-L-alanyl-D-glutamate--2,6-diaminopimelate ligase (Pseudomonas aeruginosa (strain ATCC 15692 / DSM 22644 / CIP 104116 / JCM 14847 / LMG 12228 / 1C / PRS 101 / PAO1)).